The chain runs to 348 residues: MAFKIASSPHVRKDSQTSAVMQRVILAALPGLAVQCYFFGWGTFIQVCVAIATALAAEALVLKLRNRPISPTLMDQSAVLTALLIGVAIPPLAPWYLVVIGTVFAIVMVKQLYGGLGQNLFNPAMAAYVLLLVSFPVLMTTWAAPSTLAQSSAGILDAIDVIFSAQGAADFALGIDGVSMATPLDTLKTDLSMGLTADESLKRAIFGGGSTGEGWFWVNLAYLCGGLFLLATKTIRWHISGGLIGALFVCSLFGFGASPDTHASPLFNLFSGATMLAAFFIATDPVTAATSPRGRLLFGAMIGVLIYLIRTFGGYPDGVAFAVLLANLCAPLIDYYIKPRAYGHRGSL.

The next 3 helical transmembrane spans lie at 25-45, 68-88, and 124-144; these read ILAA…GTFI, PISP…IGVA, and AMAA…TWAA. T182 is subject to FMN phosphoryl threonine. 5 consecutive transmembrane segments (helical) span residues 211-231, 237-257, 263-283, 296-316, and 317-337; these read TGEG…FLLA, WHIS…GFGA, ASPL…FIAT, LLFG…GGYP, and DGVA…DYYI.

Belongs to the NqrB/RnfD family. In terms of assembly, the complex is composed of six subunits: RnfA, RnfB, RnfC, RnfD, RnfE and RnfG. Requires FMN as cofactor.

The protein resides in the cell inner membrane. Functionally, part of a membrane-bound complex that couples electron transfer with translocation of ions across the membrane. This is Ion-translocating oxidoreductase complex subunit D from Shewanella amazonensis (strain ATCC BAA-1098 / SB2B).